The sequence spans 183 residues: NAD(P)H-quinone oxidoreductase subunit I, chloroplastic (183 aa).

4Fe-4S ferredoxin-type domains follow at residues 55–84 (GRIHFEFDKCIACEVCVRVCPINLPVVDWE) and 95–124 (KNYSIDFGVCIFCGNCVEYCPTNCLSMTEE). Residues Cys64, Cys67, Cys70, Cys74, Cys104, Cys107, Cys110, and Cys114 each contribute to the [4Fe-4S] cluster site.

The protein belongs to the complex I 23 kDa subunit family. As to quaternary structure, NDH is composed of at least 16 different subunits, 5 of which are encoded in the nucleus. [4Fe-4S] cluster serves as cofactor.

The protein resides in the plastid. Its subcellular location is the chloroplast thylakoid membrane. It catalyses the reaction a plastoquinone + NADH + (n+1) H(+)(in) = a plastoquinol + NAD(+) + n H(+)(out). The catalysed reaction is a plastoquinone + NADPH + (n+1) H(+)(in) = a plastoquinol + NADP(+) + n H(+)(out). Functionally, NDH shuttles electrons from NAD(P)H:plastoquinone, via FMN and iron-sulfur (Fe-S) centers, to quinones in the photosynthetic chain and possibly in a chloroplast respiratory chain. The immediate electron acceptor for the enzyme in this species is believed to be plastoquinone. Couples the redox reaction to proton translocation, and thus conserves the redox energy in a proton gradient. The polypeptide is NAD(P)H-quinone oxidoreductase subunit I, chloroplastic (Marchantia polymorpha (Common liverwort)).